The following is a 344-amino-acid chain: Eukaryotic translation initiation factor 2 subunit alpha homolog (344 aa).

The 72-residue stretch at 21-92 (DMAVMIQVKN…EKGYIDLSKR (72 aa)) folds into the S1 motif domain. Ser56 is subject to Phosphoserine; by GCN2. Positions 312–344 (DNEEMSGDEDSGDEEEDTGMGEVDLDAGAGIIE) are disordered. Over residues 314-336 (EEMSGDEDSGDEEEDTGMGEVDL) the composition is skewed to acidic residues.

The protein belongs to the eIF-2-alpha family. Heterotrimer composed of an alpha, a beta and a gamma chain. In terms of processing, phosphorylated at Ser-56 by GCN2.

In terms of biological role, functions in the early steps of protein synthesis by forming a ternary complex with GTP and initiator tRNA. This complex binds to a 40S ribosomal subunit, followed by mRNA binding to form a 43S pre-initiation complex. Junction of the 60S ribosomal subunit to form the 80S initiation complex is preceded by hydrolysis of the GTP bound to eIF-2 and release of an eIF-2-GDP binary complex. In order for eIF-2 to recycle and catalyze another round of initiation, the GDP bound to eIF-2 must exchange with GTP by way of a reaction catalyzed by eIF-2B. The chain is Eukaryotic translation initiation factor 2 subunit alpha homolog from Arabidopsis thaliana (Mouse-ear cress).